We begin with the raw amino-acid sequence, 247 residues long: Large ribosomal subunit protein uL30 (247 aa).

It belongs to the universal ribosomal protein uL30 family.

The polypeptide is Large ribosomal subunit protein uL30 (RPL7L1) (Sus scrofa (Pig)).